The sequence spans 346 residues: Cyclin-dependent kinase 20 (346 aa).

In terms of domain architecture, Protein kinase spans 4-288; the sequence is YCILGRIGEG…ASKALLHQYF (285 aa). ATP is bound by residues 10 to 18 and K33; that span reads IGEGAHGIV. D127 functions as the Proton acceptor in the catalytic mechanism.

It belongs to the protein kinase superfamily. CMGC Ser/Thr protein kinase family. CDC2/CDKX subfamily. As to quaternary structure, monomer. Interacts with TBC1D32 and MAK.

The protein resides in the nucleus. It is found in the cytoplasm. Its subcellular location is the cell projection. The protein localises to the cilium. It catalyses the reaction L-seryl-[protein] + ATP = O-phospho-L-seryl-[protein] + ADP + H(+). It carries out the reaction L-threonyl-[protein] + ATP = O-phospho-L-threonyl-[protein] + ADP + H(+). Its function is as follows. Required for high-level Shh responses in the developing neural tube. Together with TBC1D32, controls the structure of the primary cilium by coordinating assembly of the ciliary membrane and axoneme, allowing GLI2 to be properly activated in response to SHH signaling. Involved in cell growth. Activates CDK2, a kinase involved in the control of the cell cycle, by phosphorylating residue 'Thr-160'. The protein is Cyclin-dependent kinase 20 (CDK20) of Pongo abelii (Sumatran orangutan).